The following is a 247-amino-acid chain: GTP cyclohydrolase 1 type 2 homolog (247 aa).

A divalent metal cation is bound by residues His63, His64, Asp101, His215, and Glu219.

This sequence belongs to the GTP cyclohydrolase I type 2/NIF3 family. As to quaternary structure, homohexamer.

In Buchnera aphidicola subsp. Acyrthosiphon pisum (strain APS) (Acyrthosiphon pisum symbiotic bacterium), this protein is GTP cyclohydrolase 1 type 2 homolog.